Here is a 300-residue protein sequence, read N- to C-terminus: Ribosomal protein L11 methyltransferase (300 aa).

S-adenosyl-L-methionine-binding residues include threonine 152, glycine 173, aspartate 195, and asparagine 234.

Belongs to the methyltransferase superfamily. PrmA family.

It is found in the cytoplasm. It carries out the reaction L-lysyl-[protein] + 3 S-adenosyl-L-methionine = N(6),N(6),N(6)-trimethyl-L-lysyl-[protein] + 3 S-adenosyl-L-homocysteine + 3 H(+). Its function is as follows. Methylates ribosomal protein L11. In Paraburkholderia phytofirmans (strain DSM 17436 / LMG 22146 / PsJN) (Burkholderia phytofirmans), this protein is Ribosomal protein L11 methyltransferase.